The sequence spans 199 residues: Protein GrpE (199 aa).

Positions 1 to 24 are enriched in basic and acidic residues; the sequence is MSKQNKKDWKKFRDEHKEEHKVEN. The tract at residues 1–52 is disordered; sequence MSKQNKKDWKKFRDEHKEEHKVENEILEEETDEESQHQEPALGHPSYTALEE.

The protein belongs to the GrpE family. As to quaternary structure, homodimer.

It is found in the cytoplasm. Its function is as follows. Participates actively in the response to hyperosmotic and heat shock by preventing the aggregation of stress-denatured proteins, in association with DnaK and GrpE. It is the nucleotide exchange factor for DnaK and may function as a thermosensor. Unfolded proteins bind initially to DnaJ; upon interaction with the DnaJ-bound protein, DnaK hydrolyzes its bound ATP, resulting in the formation of a stable complex. GrpE releases ADP from DnaK; ATP binding to DnaK triggers the release of the substrate protein, thus completing the reaction cycle. Several rounds of ATP-dependent interactions between DnaJ, DnaK and GrpE are required for fully efficient folding. This Legionella pneumophila (strain Lens) protein is Protein GrpE.